The following is a 286-amino-acid chain: tRNA (guanine-N(1)-)-methyltransferase (286 aa).

S-adenosyl-L-methionine-binding positions include glycine 116 and 140–145 (IGDYVL). The segment at 232–286 (DALPPGSLTPHEEALAAEARLHAGRSAETPPPAGAAGSQAEGPPGTSPSDAAVAH) is disordered.

The protein belongs to the RNA methyltransferase TrmD family. As to quaternary structure, homodimer.

The protein resides in the cytoplasm. The catalysed reaction is guanosine(37) in tRNA + S-adenosyl-L-methionine = N(1)-methylguanosine(37) in tRNA + S-adenosyl-L-homocysteine + H(+). Functionally, specifically methylates guanosine-37 in various tRNAs. The polypeptide is tRNA (guanine-N(1)-)-methyltransferase (Acidothermus cellulolyticus (strain ATCC 43068 / DSM 8971 / 11B)).